The following is a 397-amino-acid chain: 3-ketoacyl-CoA thiolase, mitochondrial (397 aa).

The N-terminal 16 residues, 1-16 (MALLRGVFIVAAKRTP), are a transit peptide targeting the mitochondrion; not cleaved. Position 25 is an N6-acetyllysine; alternate (Lys-25). Lys-25 carries the post-translational modification N6-succinyllysine; alternate. The Acyl-thioester intermediate role is filled by Cys-92. Position 119 is a phosphothreonine (Thr-119). Phosphoserine is present on Ser-121. The residue at position 127 (Tyr-127) is a Phosphotyrosine. Thr-136 carries the post-translational modification Phosphothreonine. At Lys-137 the chain carries N6-acetyllysine; alternate. Lys-137 is subject to N6-succinyllysine; alternate. Ser-140 bears the Phosphoserine mark. An N6-acetyllysine; alternate mark is found at Lys-143, Lys-171, Lys-191, and Lys-209. 4 positions are modified to N6-succinyllysine; alternate: Lys-143, Lys-171, Lys-191, and Lys-209. N6-succinyllysine occurs at positions 212 and 214. CoA-binding residues include Arg-224 and Thr-227. The residue at position 234 (Lys-234) is an N6-acetyllysine; alternate. At Lys-234 the chain carries N6-succinyllysine; alternate. Lys-240 bears the N6-succinyllysine mark. The residue at position 241 (Lys-241) is an N6-acetyllysine. Ser-251 is a binding site for CoA. N6-acetyllysine is present on residues Lys-269 and Lys-270. Lys-305 carries the post-translational modification N6-acetyllysine; alternate. Lys-305 is subject to N6-succinyllysine; alternate. Ser-310 is modified (phosphoserine). At Lys-312 the chain carries N6-acetyllysine; alternate. Position 312 is an N6-succinyllysine; alternate (Lys-312). Ser-333 carries the post-translational modification Phosphoserine. 2 positions are modified to N6-acetyllysine: Lys-340 and Lys-375. The active-site Proton donor/acceptor is Cys-382.

The protein belongs to the thiolase-like superfamily. Thiolase family. As to quaternary structure, homotetramer. Interacts with BNIP3.

The protein localises to the mitochondrion. The catalysed reaction is an acyl-CoA + acetyl-CoA = a 3-oxoacyl-CoA + CoA. The enzyme catalyses 2 acetyl-CoA = acetoacetyl-CoA + CoA. It catalyses the reaction acetyl-CoA + H2O = acetate + CoA + H(+). It carries out the reaction propanoyl-CoA + H2O = propanoate + CoA + H(+). The catalysed reaction is butanoyl-CoA + H2O = butanoate + CoA + H(+). The enzyme catalyses hexanoyl-CoA + H2O = hexanoate + CoA + H(+). It catalyses the reaction octanoyl-CoA + H2O = octanoate + CoA + H(+). It carries out the reaction decanoyl-CoA + H2O = decanoate + CoA + H(+). The catalysed reaction is dodecanoyl-CoA + H2O = dodecanoate + CoA + H(+). The enzyme catalyses tetradecanoyl-CoA + H2O = tetradecanoate + CoA + H(+). It catalyses the reaction hexadecanoyl-CoA + H2O = hexadecanoate + CoA + H(+). It participates in lipid metabolism; fatty acid beta-oxidation. In the production of energy from fats, this is one of the enzymes that catalyzes the last step of the mitochondrial beta-oxidation pathway, an aerobic process breaking down fatty acids into acetyl-CoA. Using free coenzyme A/CoA, catalyzes the thiolytic cleavage of medium- to long-chain unbranched 3-oxoacyl-CoAs into acetyl-CoA and a fatty acyl-CoA shortened by two carbon atoms. Also catalyzes the condensation of two acetyl-CoA molecules into acetoacetyl-CoA and could be involved in the production of ketone bodies. Also displays hydrolase activity on various fatty acyl-CoAs. Thereby, could be responsible for the production of acetate in a side reaction to beta-oxidation. Abolishes BNIP3-mediated apoptosis and mitochondrial damage. This chain is 3-ketoacyl-CoA thiolase, mitochondrial (ACAA2), found in Bos taurus (Bovine).